Here is a 311-residue protein sequence, read N- to C-terminus: Iron-binding protein YfeA (311 aa).

An N-terminal signal peptide occupies residues 1-31; sequence MIERLNSPFLRAAALFTIVAFSSLISTAALA. The Fe(2+) site is built by His76, His141, Glu207, and Asp282.

Belongs to the bacterial solute-binding protein 9 family. Monomer.

It is found in the periplasm. Functionally, part of the ATP-binding cassette (ABC) transport system YfeABC involved in iron import. Binds iron with high affinity and specificity and delivers it to the membrane permease for translocation into the cytoplasm. Also binds Mn(2+) and Zn(2+). In Yersinia pestis, this protein is Iron-binding protein YfeA (yfeA).